The sequence spans 416 residues: UDP-N-acetylmuramoylalanine--D-glutamate ligase (416 aa).

Position 108 to 114 (108 to 114 (GTTGKTT)) interacts with ATP.

This sequence belongs to the MurCDEF family.

The protein resides in the cytoplasm. It carries out the reaction UDP-N-acetyl-alpha-D-muramoyl-L-alanine + D-glutamate + ATP = UDP-N-acetyl-alpha-D-muramoyl-L-alanyl-D-glutamate + ADP + phosphate + H(+). It participates in cell wall biogenesis; peptidoglycan biosynthesis. Its function is as follows. Cell wall formation. Catalyzes the addition of glutamate to the nucleotide precursor UDP-N-acetylmuramoyl-L-alanine (UMA). In Chlamydia trachomatis serovar L2b (strain UCH-1/proctitis), this protein is UDP-N-acetylmuramoylalanine--D-glutamate ligase.